Reading from the N-terminus, the 98-residue chain is UPF0235 protein Mmc1_3654 (98 aa).

It belongs to the UPF0235 family.

The polypeptide is UPF0235 protein Mmc1_3654 (Magnetococcus marinus (strain ATCC BAA-1437 / JCM 17883 / MC-1)).